The following is a 108-amino-acid chain: MGVQVETISPGDGRTFPKRGQTCVVHYTGMLEDGKKFDSSRDRNKPFKFVLGKQEVIRGWEEGVAQMSVGQRAKLTISPDYAYGATGHPGIIPPNATLIFDVELLKLE.

The PPIase FKBP-type domain maps to 20-108 (GQTCVVHYTG…IFDVELLKLE (89 aa)). K53 bears the N6-acetyllysine; alternate mark. K53 is modified (N6-succinyllysine; alternate).

Belongs to the FKBP-type PPIase family. FKBP1 subfamily. In terms of assembly, interacts with TGFBR1; prevents TGFBR1 phosphorylation by TGFBR2 and stabilizes it in the inactive conformation. Interacts with ACVR1B and SMAD7. Identified in a complex composed of RYR1, PDE4D, PKA, FKBP1A and protein phosphatase 1 (PP1). Interacts directly with RYR2 and RYR3. Interacts with GLMN; rapamycin and FK506 abolish the interaction with GLMN in a dose dependent manner. Interacts directly with RYR1.

Its subcellular location is the cytoplasm. It localises to the cytosol. The protein resides in the sarcoplasmic reticulum membrane. It catalyses the reaction [protein]-peptidylproline (omega=180) = [protein]-peptidylproline (omega=0). Inhibited by both FK506 and rapamycin. Functionally, keeps in an inactive conformation TGFBR1, the TGF-beta type I serine/threonine kinase receptor, preventing TGF-beta receptor activation in absence of ligand. May modulate the RYR1 calcium channel activity. PPIases accelerate the folding of proteins. It catalyzes the cis-trans isomerization of proline imidic peptide bonds in oligopeptides. The sequence is that of Peptidyl-prolyl cis-trans isomerase FKBP1A (FKBP1A) from Bos taurus (Bovine).